Reading from the N-terminus, the 224-residue chain is Oxalate oxidase GF-2.8 (224 aa).

Positions 1–23 (MGYSKTLVAGLFAMLLLAPAVLA) are cleaved as a signal peptide. Cys33 and Cys49 are disulfide-bonded. Positions 63 to 214 (SKLAKAGNTS…ALRVEARVVE (152 aa)) constitute a Cupin type-1 domain. N-linked (GlcNAc...) asparagine glycosylation is found at Asn70 and Asn75. His111, His113, Glu118, and His160 together coordinate Mn(2+).

This sequence belongs to the germin family. Oligomer (believed to be a pentamer but probably hexamer).

It is found in the secreted. Its subcellular location is the extracellular space. The protein localises to the apoplast. It localises to the cytoplasm. The protein resides in the cell wall. It carries out the reaction oxalate + O2 + 2 H(+) = H2O2 + 2 CO2. Its function is as follows. Produces developmental and stress-related release of hydrogen peroxide in the apoplast. May play an important role in several aspects of plant growth and defense mechanisms. The sequence is that of Oxalate oxidase GF-2.8 from Triticum aestivum (Wheat).